The primary structure comprises 141 residues: Large ribosomal subunit protein uL16 (141 aa).

It belongs to the universal ribosomal protein uL16 family. As to quaternary structure, part of the 50S ribosomal subunit.

Binds 23S rRNA and is also seen to make contacts with the A and possibly P site tRNAs. The protein is Large ribosomal subunit protein uL16 of Microchaete diplosiphon (Fremyella diplosiphon).